Consider the following 504-residue polypeptide: Anaerobic nitric oxide reductase transcription regulator NorR (504 aa).

A 4-aspartylphosphate modification is found at aspartate 57. One can recognise a Sigma-54 factor interaction domain in the interval methionine 187 to valine 416. Residues glycine 215 to glutamate 222 and alanine 278 to glutamate 287 contribute to the ATP site. Residues tryptophan 479–lysine 498 constitute a DNA-binding region (H-T-H motif).

It participates in nitrogen metabolism; nitric oxide reduction. In terms of biological role, required for the expression of anaerobic nitric oxide (NO) reductase, acts as a transcriptional activator for at least the norVW operon. Activation also requires sigma-54. This Escherichia coli O45:K1 (strain S88 / ExPEC) protein is Anaerobic nitric oxide reductase transcription regulator NorR.